Reading from the N-terminus, the 747-residue chain is ESX-1 secretion system protein EccCa1 (747 aa).

Transmembrane regions (helical) follow at residues 41–61 (ILPYVMGGAMLGMIAIMVAGG), 65–85 (LSPYMLMMPLMMIVMMVGGLA), and 222–242 (FPTIAIGGDLAGAAGLMTAMI). In terms of domain architecture, FtsK spans 456–665 (GNVMYLDIKE…LRTTSSHESK (210 aa)). Residue 479–486 (GTTGSGKS) participates in ATP binding.

In terms of assembly, part of the ESX-1 / type VII secretion system (T7SS), which is composed of cytosolic and membrane components. The ESX-1 membrane complex is composed of EccB1, EccCa1, EccCb1, EccD1 and EccE1.

The protein localises to the cell inner membrane. In terms of biological role, part of the ESX-1 specialized secretion system, which delivers several virulence factors to host cells during infection, including the key virulence factors EsxA (ESAT-6) and EsxB (CFP-10). This is ESX-1 secretion system protein EccCa1 from Mycobacterium tuberculosis (strain CDC 1551 / Oshkosh).